The primary structure comprises 1294 residues: Voltage-gated inwardly rectifying potassium channel KCNH2 (1294 aa).

Residues 1–377 lie on the Cytoplasmic side of the membrane; it reads RKFIIANARV…RIHRWTILHY (377 aa). The PAS domain occupies 15–44; it reads VIYCNDGFCELCGYSRAEVMQRPCTCDFLH. In terms of domain architecture, PAC spans 66 to 118; sequence RKVEIAFYRKDGSCFLCLVDVVPVKNEDGAVIMFILNFEVVMEKDMVGSPARD. The disordered stretch occupies residues 207–258; sequence LVAPGSPPSSVPGPPHTSPRAHSLNPDASGSSCSLARTRSRESCASVRRASS. The span at 211-223 shows a compositional bias: pro residues; it reads GSPPSSVPGPPHT. Serine 212 and serine 216 each carry phosphoserine. Positions 232–243 are enriched in polar residues; that stretch reads PDASGSSCSLAR. A phosphoserine mark is found at serine 257, serine 258, serine 294, and serine 325. The chain crosses the membrane as a helical span at residues 378 to 398; it reads SPFKAVWDWLILLLVIYTAVF. Residues 399 to 424 are Extracellular-facing; it reads TPYSAAFLLKEPEEDAQTADCGYACQ. A helical transmembrane segment spans residues 425–445; the sequence is PLAVVDLIVDIMFIVDILINF. The Cytoplasmic segment spans residues 446–469; that stretch reads RTTYVNANEEVVSHPGRIAVHYFK. The chain crosses the membrane as a helical span at residues 470-490; the sequence is GWFLIDMVAAIPFDLLIFGSG. At 491–494 the chain is on the extracellular side; it reads SEEL. Residues 495–515 form a helical; Voltage-sensor membrane-spanning segment; the sequence is IGLLKTARLLRLVRVARKLDR. The Cytoplasmic segment spans residues 516–521; it reads YSEYGA. The helical transmembrane segment at 522 to 542 threads the bilayer; it reads AVLFLLMCTFALIAHWLACIW. Topologically, residues 543-585 are extracellular; sequence YAIGNMEQPDMNSRIGWLHNLGDQIGKPYNSSGLGGPSIKDKY. The pore-forming intramembrane region spans 586–606; that stretch reads VTALYFTFSSLTSVGFGNVSP. The Selectivity filter motif lies at 598 to 603; the sequence is SVGFGN. Residues 607–612 lie on the Extracellular side of the membrane; sequence NTNSEK. Residues 613–633 traverse the membrane as a helical segment; sequence IFSICVMLIGSLMYASIFGNV. Topologically, residues 634 to 1294 are cytoplasmic; it reads SAIIQRLYSG…IAHWLACIWY (661 aa). Positions 716–816 are cNMP-binding domain; the sequence is PFRGATKGCL…IHRDDLLEVL (101 aa). Residues 844–956 form a disordered region; the sequence is GSPGSTELEG…LTEDGDKSDT (113 aa). Serine 845 and serine 848 each carry phosphoserine. Over residues 857 to 866 the composition is skewed to basic residues; the sequence is RQRRRKLSFR. Over residues 902–913 the composition is skewed to low complexity; sequence GDSPSSGPSSPE. The residue at position 987 (arginine 987) is an Omega-N-methylarginine. Positions 1008–1035 form a coiled coil; it reads RGDVESRLDALQRQLNRLETRLSADMAT. Serine 1110 is subject to Phosphoserine.

It belongs to the potassium channel family. H (Eag) (TC 1.A.1.20) subfamily. Kv11.1/KCNH2 sub-subfamily. In terms of assembly, the potassium channel is probably composed of a homo- or heterotetrameric complex of pore-forming alpha subunits that can associate with modulating beta subunits. Interacts with DNAJB12 and DNAJB14; chaperones DNAJB12 and DNAJB14 promote tetramerization. Heteromultimer with KCNH6/ERG2 and KCNH7/ERG3. Interacts with ALG10B. Forms a stable complex with KCNE1 or KCNE2, and that this heteromultimerization regulates Inward rectifier potassium channel activity. Interacts with CANX. The core-glycosylated, but not the fully glycosylated form interacts with RNF207. Interacts with NDFIP1 and NDFIP2; this interaction decreases the cell membrane expression by targeting KCNH2, through interaction with NEDD4L, for the degradation through the multivesicular bodies (MVBs)-lysosomal pathway. Phosphorylated on serine and threonine residues. Phosphorylation by PKA inhibits ion conduction. Highly expressed in heart and brain.

Its subcellular location is the cell membrane. The catalysed reaction is K(+)(in) = K(+)(out). In terms of biological role, pore-forming (alpha) subunit of voltage-gated inwardly rectifying potassium channel. Characterized by unusual gating kinetics by producing relatively small outward currents during membrane depolarization and large inward currents during subsequent repolarization which reflect a rapid inactivation during depolarization and quick recovery from inactivation but slow deactivation (closing) during repolarization. Channel properties are modulated by cAMP and subunit assembly. Forms a stable complex with KCNE1 or KCNE2, and that this heteromultimerization regulates inward rectifier potassium channel activity. The sequence is that of Voltage-gated inwardly rectifying potassium channel KCNH2 from Cavia porcellus (Guinea pig).